The following is a 122-amino-acid chain: MIQKETNLVVADNSGAKKVRCIHVFGGTGRRYASLGDQIIVSVKAAVPGGIVKKKDVCRAVVVRCVKESRRKDGSYIRFDENAVVLLNAQGEPRGTRIFGPVARELRDRKFMKIVSLAPEVL.

It belongs to the universal ribosomal protein uL14 family. Part of the 50S ribosomal subunit. Forms a cluster with proteins L3 and L19. In the 70S ribosome, L14 and L19 interact and together make contacts with the 16S rRNA in bridges B5 and B8.

Binds to 23S rRNA. Forms part of two intersubunit bridges in the 70S ribosome. This chain is Large ribosomal subunit protein uL14, found in Pelodictyon phaeoclathratiforme (strain DSM 5477 / BU-1).